The chain runs to 354 residues: Rhodopsin (354 aa).

At 1–36 (MNGTEGPNFYIPMSNKTGVVRSPFEYPQYYLAEPWQ) the chain is on the extracellular side. N-linked (GlcNAc...) asparagine glycans are attached at residues Asn2 and Asn15. Residues 37 to 61 (YSILCAYMFLLILLGFPINFMTLYV) traverse the membrane as a helical segment. The Cytoplasmic segment spans residues 62–73 (TIQHKKLRTPLN). The chain crosses the membrane as a helical span at residues 74-96 (YILLNLAFANHFMVLCGFTVTMY). The Extracellular portion of the chain corresponds to 97–110 (SSMNGYFILGATGC). Cysteines 110 and 187 form a disulfide. A helical transmembrane segment spans residues 111–133 (YVEGFFATLGGEIALWSLVVLAI). The short motif at 134 to 136 (ERY) is the 'Ionic lock' involved in activated form stabilization element. Over 134-152 (ERYVVVCKPMSNFRFSENH) the chain is Cytoplasmic. The helical transmembrane segment at 153 to 173 (AVMGVAFTWIMALSCAVPPLL) threads the bilayer. Over 174 to 202 (GWSRYIPEGMQCSCGVDYYTLKPEVNNES) the chain is Extracellular. A helical transmembrane segment spans residues 203 to 224 (FVIYMFVVHFTIPLIIIFFCYG). The Cytoplasmic segment spans residues 225–252 (RLVCTVKEAAAQQQESATTQKAEKEVTR). The helical transmembrane segment at 253 to 274 (MVIIMVVFFLICWVPYASVAFF) threads the bilayer. Topologically, residues 275–286 (IFSNQGSEFGPI) are extracellular. The chain crosses the membrane as a helical span at residues 287–308 (FMTVPAFFAKSSSIYNPVIYIM). Position 296 is an N6-(retinylidene)lysine (Lys296). At 309 to 354 (LNKQFRNCMITTLCCGKNPFGEDDASSAATSKTEASSVSSSQVSPA) the chain is on the cytoplasmic side. Residues Cys322 and Cys323 are each lipidated (S-palmitoyl cysteine). The tract at residues 331 to 354 (DDASSAATSKTEASSVSSSQVSPA) is disordered. A compositionally biased stretch (low complexity) spans 334–354 (SSAATSKTEASSVSSSQVSPA).

The protein belongs to the G-protein coupled receptor 1 family. Opsin subfamily. In terms of processing, contains one covalently linked retinal chromophore. Upon light absorption, the covalently bound 11-cis-retinal is converted to all-trans-retinal. After hydrolysis of the Schiff base and release of the covalently bound all-trans-retinal, active rhodopsin is regenerated by binding of a fresh molecule of 11-cis-retinal.

The protein localises to the membrane. It localises to the cell projection. Its subcellular location is the cilium. It is found in the photoreceptor outer segment. Its function is as follows. Photoreceptor required for image-forming vision at low light intensity. Required for photoreceptor cell viability after birth. Light-induced isomerization of 11-cis to all-trans retinal triggers a conformational change that activates signaling via G-proteins. Subsequent receptor phosphorylation mediates displacement of the bound G-protein alpha subunit by arrestin and terminates signaling. The sequence is that of Rhodopsin (RHO) from Bufo bufo (European toad).